We begin with the raw amino-acid sequence, 106 residues long: AQEFVNSKIQPGKVVVFIKPTCPYCRKTQEILSQLPFKQGLLEFVDITATSDMSEIQDYLQQLTGARTVPRVFLGKDCIGGCSDLIAMQEKGELLARLKEMGALRQ.

Position 1 is an N-acetylalanine (A1). The Glutaredoxin domain occupies 2-105 (QEFVNSKIQP…ARLKEMGALR (104 aa)). Residue K8 is modified to N6-succinyllysine. Cystine bridges form between C22-C25 and C78-C82.

This sequence belongs to the glutaredoxin family.

It is found in the cytoplasm. In terms of biological role, has a glutathione-disulfide oxidoreductase activity in the presence of NADPH and glutathione reductase. Reduces low molecular weight disulfides and proteins. This chain is Glutaredoxin-1 (GLRX), found in Oryctolagus cuniculus (Rabbit).